We begin with the raw amino-acid sequence, 383 residues long: F-box/kelch-repeat protein At2g22030 (383 aa).

One can recognise an F-box domain in the interval 23–71 (SLLFSSLPYDVVLNCLARVSRRYYPNLSCVSKSFQSLVRSPELAHMRSL). Kelch repeat units lie at residues 130–175 (KIYF…VVNG), 176–220 (KLYV…LMRY), and 269–317 (GVCV…GMVD).

This chain is F-box/kelch-repeat protein At2g22030, found in Arabidopsis thaliana (Mouse-ear cress).